We begin with the raw amino-acid sequence, 237 residues long: DNA repair protein RecO (237 aa).

This sequence belongs to the RecO family.

Functionally, involved in DNA repair and RecF pathway recombination. This chain is DNA repair protein RecO, found in Rickettsia peacockii (strain Rustic).